Reading from the N-terminus, the 57-residue chain is Preprotein translocase subunit SecG (57 aa).

Over 1–31 the chain is Cytoplasmic; it reads MAKKKGEGPGLMSSAGLMRYFESEETSIKLD. Residues 32 to 53 traverse the membrane as a helical segment; the sequence is PKMVIGAGIASGVAIMALNITF. Over 54 to 57 the chain is Extracellular; that stretch reads GLWP.

This sequence belongs to the SEC61-beta family. In terms of assembly, component of the protein translocase complex. Heterotrimer consisting of alpha (SecY), beta (SecG) and gamma (SecE) subunits. Can form oligomers of the heterotrimer.

It is found in the cell membrane. In terms of biological role, involved in protein export. The function of the beta subunit is unknown, but it may be involved in stabilization of the trimeric complex. The polypeptide is Preprotein translocase subunit SecG (Methanothrix thermoacetophila (strain DSM 6194 / JCM 14653 / NBRC 101360 / PT) (Methanosaeta thermophila)).